Here is a 301-residue protein sequence, read N- to C-terminus: Cutinase (301 aa).

The signal sequence occupies residues 1–40 (MAVMTPRRERSSLLSRALQVTAAAATALVTAVSLAAPAHA). Position 100 (Tyr-100) interacts with poly(ethylene terephthalate). The active-site Nucleophile is Ser-170. Poly(ethylene terephthalate) is bound by residues Met-171 and Trp-195. Active-site charge relay system residues include Asp-216 and His-248. Cys-281 and Cys-299 are oxidised to a cystine.

This sequence belongs to the AB hydrolase superfamily.

The protein localises to the secreted. Its subcellular location is the periplasm. It carries out the reaction a butanoate ester + H2O = an aliphatic alcohol + butanoate + H(+). The catalysed reaction is (ethylene terephthalate)(n) + H2O = (ethylene terephthalate)(n-1) + 4-[(2-hydroxyethoxy)carbonyl]benzoate + H(+). It catalyses the reaction cutin + H2O = cutin monomers.. With respect to regulation, activated by magnesium ions. Activated by calcium ions. Inhibited by the serine hydrolase inhibitor phenylmethanesulfonyl fluoride (PMSF). Functionally, catalyzes the hydrolysis of cutin, a polyester that forms the structure of plant cuticle. Shows esterase activity towards p-nitrophenol-linked aliphatic esters (pNP-aliphatic esters). Also hydrolyzes the triglyceride triolein. Capable of degrading the plastic poly(ethylene terephthalate) (PET), the most abundant polyester plastic in the world. This Thermobifida fusca (strain YX) protein is Cutinase.